A 673-amino-acid chain; its full sequence is Metal-nicotianamine transporter YSL1 (673 aa).

Residues 1–13 (MEIEQRRIMKREG) show a composition bias toward basic and acidic residues. The interval 1–39 (MEIEQRRIMKREGEEEEDNNQLSLQEEEPDTEEEMSGRT) is disordered. A compositionally biased stretch (acidic residues) spans 14-34 (EEEEDNNQLSLQEEEPDTEEE). The next 16 helical transmembrane spans lie at 46–66 (QITVRGVFVSIVIGVVFSVIA), 71–91 (LTTGIVPNLNSSAALLAFVFV), 119–139 (SAVACYGIAVGGGFASYLLGL), 163–183 (GLGWMTAYLFVVCFIGLFVLI), 225–245 (FMKYFSFSFLWGFFQWFFSGI), 260–280 (AWKQTFFFDFSMTFVGAGMIC), 283–303 (LVNLSLLLGAILSYGLMWPLL), 328–348 (VFLSVALILGDGLYTFVKILF), 392–412 (FAVSGYLTFAAVSTVVVPLIF), 420–440 (VIVAYIFAPSLAFCNAYGAGL), 442–462 (DINMAYNYGKIGLFVIAAVTG), 467–487 (VVAGLAGCGLIKSVVSVSCIL), 510–530 (IGTVVGCIVTPLSFFLFYKAF), 558–578 (FSALPLHCLQMCYGFFGFAVL), 604–624 (FLVGAYFAIDMCVGTLIVFVW), and 642–662 (GLICGEGLWTLPAAVLALAGV).

It belongs to the YSL (TC 2.A.67.2) family. Low levels of expression in leaves and shoots, but not detected in roots. Restricted to the vasculature, in the xylem parenchyma surrounding xylem tubes. Expressed in pollen grains, in the vasculature of petals and sepals, in the carpel veins, in the style underneath the stigmatic papillae, in the vascular tissue of the funiculus and in the chalazal endosperm.

It localises to the membrane. In terms of biological role, involved in iron loading of the seeds. Acts probably as a transporter of iron- and metal-nicotianamine chelates. The protein is Metal-nicotianamine transporter YSL1 (YSL1) of Arabidopsis thaliana (Mouse-ear cress).